We begin with the raw amino-acid sequence, 473 residues long: Myocyte-specific enhancer factor 2C (473 aa).

Residues 1–61 (MGRKKIQITR…NKLFQYASTD (61 aa)) form the MADS-box domain. The residue at position 4 (lysine 4) is an N6-acetyllysine. The segment at residues 58–86 (ASTDMDKVLLKYTEYNEPHESRTNSDIVE) is a DNA-binding region (mef2-type). Residue serine 59 is modified to Phosphoserine; by CK2. A disordered region spans residues 91–116 (KGLNGCDSPDPDADDSVGHSPESEDK). Residues serine 98, serine 106, and serine 110 each carry the phosphoserine modification. N6-acetyllysine occurs at positions 116 and 119. The interval 180 to 206 (NSMSPGVTHRPPSAGNTGGLMGGDLTS) is disordered. A phosphoserine mark is found at serine 222 and serine 228. An N6-acetyllysine mark is found at lysine 234 and lysine 239. Phosphoserine is present on serine 240. Residues lysine 252 and lysine 264 each carry the N6-acetyllysine modification. Positions 271–278 (SEDVDLLL) are beta domain. Phosphothreonine; by MAPK14 is present on residues threonine 293 and threonine 300. Positions 368–399 (ACTSTHLSQSSNLSLPSTQSLNIKSEPVSPPR) are transcription repressor. Residues 375–390 (SQSSNLSLPSTQSLNI) show a composition bias toward polar residues. The tract at residues 375 to 473 (SQSSNLSLPS…RMRLSEGWAT (99 aa)) is disordered. Lysine 391 is covalently cross-linked (Glycyl lysine isopeptide (Lys-Gly) (interchain with G-Cter in SUMO)). Serine 396 is modified (phosphoserine; by CDK5). Phosphoserine; by MAPK7 is present on serine 419. Residues 419-432 (SPVDSLSSCSSSYD) show a composition bias toward low complexity. Over residues 433–443 (GSDREDHRNEF) the composition is skewed to basic and acidic residues. Phosphoserine is present on serine 445.

This sequence belongs to the MEF2 family. Forms a complex with class II HDACs in undifferentiating cells. On myogenic differentiation, HDACs are released into the cytoplasm allowing MEF2s to interact with other proteins for activation. Interacts with EP300 in differentiating cells; the interaction acetylates MEF2C leading to increased DNA binding and activation. Interacts with HDAC7 and CARM1. Interacts with HDAC4 and HDAC9; the interaction with HDACs represses transcriptional activity. Interacts with LPIN1. Interacts with MYOCD. Interacts with AKAP13. Interacts with FOXK1; the interaction inhibits MEF2C transactivation activity. Interacts (via N-terminus) with HABP4; this interaction decreases DNA-binding activity of MEF2C in myocardial cells in response to mechanical stress. Interacts with JPH2; interaction specifically takes place with the Junctophilin-2 N-terminal fragment cleavage product of JPH2. Interacts (via MADS box) with SOX18. Interacts with PHF7; the interaction promotes MEF2C binding to its transcription targets. Post-translationally, phosphorylated on Ser-59; which enhances DNA binding activity. Phosphorylated on Ser-396; which is required for Lys-391 sumoylation and inhibits transcriptional activity. In terms of processing, acetylated by p300 on several sites in diffentiating myocytes. Acetylation on Lys-4 increases DNA binding and transactivation. Sumoylated on Lys-391 with SUMO2 but not SUMO1; which represses transcriptional activity. Post-translationally, proteolytically cleaved in cerebellar granule neurons on several sites by caspase 3 and caspase 7 following neurotoxicity. Preferentially cleaves the CDK5-mediated hyperphosphorylated form which leads to neuron apoptosis and transcriptional inactivation. Expressed in the heart. Expressed in cardiac myocytes (at protein level).

The protein localises to the nucleus. Its subcellular location is the cytoplasm. It is found in the sarcoplasm. Its function is as follows. Transcription activator which binds specifically to the MEF2 element present in the regulatory regions of many muscle-specific genes. Controls cardiac morphogenesis and myogenesis, and is also involved in vascular development. Enhances transcriptional activation mediated by SOX18. Plays an essential role in hippocampal-dependent learning and memory by suppressing the number of excitatory synapses and thus regulating basal and evoked synaptic transmission. Crucial for normal neuronal development, distribution, and electrical activity in the neocortex. Necessary for proper development of megakaryocytes and platelets and for bone marrow B-lymphopoiesis. Required for B-cell survival and proliferation in response to BCR stimulation, efficient IgG1 antibody responses to T-cell-dependent antigens and for normal induction of germinal center B-cells. May also be involved in neurogenesis and in the development of cortical architecture. The sequence is that of Myocyte-specific enhancer factor 2C from Rattus norvegicus (Rat).